The primary structure comprises 642 residues: Chaperone protein DnaK (642 aa).

Residue T200 is modified to Phosphothreonine; by autocatalysis. Residues 608 to 618 (QAESQAAGEGQ) are compositionally biased toward low complexity. The tract at residues 608-642 (QAESQAAGEGQPDAGKKDDGNVVDAEFEEVKKDKQ) is disordered.

Belongs to the heat shock protein 70 family.

In terms of biological role, acts as a chaperone. In Laribacter hongkongensis (strain HLHK9), this protein is Chaperone protein DnaK.